The sequence spans 90 residues: Large ribosomal subunit protein eL34 (90 aa).

The Zn(2+) site is built by Cys-36, Cys-39, Cys-72, and Cys-75. Positions 41-72 are disordered; it reads RPLNGVPRGRPSELRKLPKTKKRPERPYPNLC.

This sequence belongs to the eukaryotic ribosomal protein eL34 family. In terms of assembly, part of the 50S ribosomal subunit. Zn(2+) is required as a cofactor.

The protein is Large ribosomal subunit protein eL34 of Thermococcus kodakarensis (strain ATCC BAA-918 / JCM 12380 / KOD1) (Pyrococcus kodakaraensis (strain KOD1)).